Here is a 282-residue protein sequence, read N- to C-terminus: 3-hydroxyanthranilate 3,4-dioxygenase (282 aa).

A domain A (catalytic) region spans residues 1 to 160; that stretch reads MAMAINVKKW…SKQYKSGKPD (160 aa). R43 contributes to the O2 binding site. Fe cation contacts are provided by H47, E53, and H91. Position 53 (E53) interacts with substrate. Positions 95 and 105 each coordinate substrate. Residues 161 to 177 are linker; it reads PDQPKAKMPFCLSTEQV. The tract at residues 178 to 282 is domain B; the sequence is MEPFSFQHWL…LSTSQVPLPM (105 aa).

The protein belongs to the 3-HAO family. Monomer. Requires Fe(2+) as cofactor.

The protein localises to the cytoplasm. The protein resides in the cytosol. The enzyme catalyses 3-hydroxyanthranilate + O2 = (2Z,4Z)-2-amino-3-carboxymuconate 6-semialdehyde. It participates in cofactor biosynthesis; NAD(+) biosynthesis; quinolinate from L-kynurenine: step 3/3. Functionally, catalyzes the oxidative ring opening of 3-hydroxyanthranilate to 2-amino-3-carboxymuconate semialdehyde, which spontaneously cyclizes to quinolinate. The protein is 3-hydroxyanthranilate 3,4-dioxygenase (haao) of Xenopus laevis (African clawed frog).